Here is a 1984-residue protein sequence, read N- to C-terminus: Sodium channel protein type 9 subunit alpha (1984 aa).

Residues 1–125 are Cytoplasmic-facing; sequence MAMLPPPGPQ…RRISIKILVH (125 aa). The segment covering 26 to 47 has biased composition (basic and acidic residues); the sequence is RIAEGKTKEPKEEKKDDHDEGP. The disordered stretch occupies residues 26 to 55; that stretch reads RIAEGKTKEPKEEKKDDHDEGPKPSSDLEA. Residues 112-408 form an I repeat; that stretch reads FSPLRRISIK…VAMAYEEQNQ (297 aa). The helical transmembrane segment at 126–145 threads the bilayer; the sequence is SLFSMLIMCTILTNCIFMTM. The Extracellular segment spans residues 146-150; sequence NNPAE. Residues 151 to 172 form a helical membrane-spanning segment; it reads WTKNVEYTFTGIYTFESLVKIF. At 173 to 185 the chain is on the cytoplasmic side; sequence ARGFCVGEFTFLR. Residues 186-204 traverse the membrane as a helical segment; that stretch reads DPWNWLDFIVIVFAYLTEF. Over 205 to 210 the chain is Extracellular; sequence VNLGNV. N-linked (GlcNAc...) asparagine glycosylation occurs at Asn-209. A helical membrane pass occupies residues 211–227; it reads SALRTFRVLRALKTISV. Over 228–241 the chain is Cytoplasmic; the sequence is IPGLKTIVGALIQS. The chain crosses the membrane as a helical span at residues 242–267; it reads VKKLSDVIILTVFCLSVFALIGLQLF. Over 268-344 the chain is Extracellular; it reads MGHLKHKCLR…PDYGYTSFDT (77 aa). Cys-275 and Cys-322 are joined by a disulfide. N-linked (GlcNAc...) asparagine glycosylation is present at Asn-281. The segment at residues 345 to 361 is an intramembrane region (pore-forming); the sequence is FSWAFLALFRLMTQDYW. Over 362 to 374 the chain is Extracellular; it reads ENLYQQTLRAAGK. A helical membrane pass occupies residues 375-400; the sequence is TYMIFFVVVIFLGSFYLINLILAVVA. Residues 401-742 lie on the Cytoplasmic side of the membrane; the sequence is MAYEEQNQAN…FIYIIVMDPF (342 aa). Residues 459-469 show a composition bias toward low complexity; it reads SSSETSKLSSK. Disordered stretches follow at residues 459–517 and 563–610; these read SSSE…LGVE and GSET…PPML. A compositionally biased stretch (basic residues) spans 472 to 484; the sequence is KERRNRRKKKNQK. Basic and acidic residues-rich tracts occupy residues 487 to 508 and 571 to 583; these read SSGE…ESIS and DEHS…ESRR. The II repeat unit spans residues 723–986; that stretch reads CSPFWIKFKK…EEDTDANNLQ (264 aa). Residues 743–759 form a helical membrane-spanning segment; sequence VDLAITICIVLNTLFMA. Over 760–768 the chain is Extracellular; it reads MEHHPMTEE. A helical membrane pass occupies residues 769–793; the sequence is FKNVLVVGNLVFTGIFAAEMVLKLI. The Cytoplasmic portion of the chain corresponds to 794–802; it reads AMDPYEYFQ. The chain crosses the membrane as a helical span at residues 803–819; that stretch reads VGWNVFDSLIVTLSLVE. Residues 820-828 lie on the Extracellular side of the membrane; the sequence is LFLADVEGL. Residues 829-845 traverse the membrane as a helical segment; it reads SVLRSFRLLRVFKLAKS. The Cytoplasmic segment spans residues 846–862; that stretch reads WPTLNMLIKIIGNSVGP. Residues 863 to 885 traverse the membrane as a helical segment; sequence LGNLTLVLAIIVFIFAVVGMQLF. The Extracellular segment spans residues 886-912; that stretch reads GKSYKECVCKINDDCSLPRWHMNDFFH. Cys-894 and Cys-900 form a disulfide bridge. The pore-forming intramembrane region spans 913-925; it reads SFLIVFRVLCGEW. At 926-937 the chain is on the extracellular side; the sequence is IETMWDCMEVAG. Cys-932 and Cys-941 form a disulfide bridge. A helical membrane pass occupies residues 938–964; that stretch reads QAMCLIVYMMVMVIGNLVVLNLFLALL. Topologically, residues 965–1184 are cytoplasmic; it reads LSSFSSDNLS…WWNIRKTCYR (220 aa). The tract at residues 1087-1146 is disordered; sequence PIAPGESDLENMNTEELSSDSESEYSKERLNRSSSSECSTVDNALPGEGEEAEAEPVNSD. Residues 1118 to 1128 show a composition bias toward polar residues; the sequence is RSSSSECSTVD. Over residues 1134–1146 the composition is skewed to acidic residues; that stretch reads EGEEAEAEPVNSD. An III repeat occupies 1177-1485; the sequence is NIRKTCYRIV…KKYYNAMKKL (309 aa). The chain crosses the membrane as a helical span at residues 1185–1209; sequence IVEHSWFESFIVLMILLSSGALAFE. Over 1210–1221 the chain is Extracellular; it reads DIYIEKKKTIKI. Residues 1222-1247 traverse the membrane as a helical segment; sequence ILEYADKIFTYIFILEMLLKWVAYGY. Residues 1248 to 1249 lie on the Cytoplasmic side of the membrane; the sequence is KT. The chain crosses the membrane as a helical span at residues 1250 to 1275; sequence YFTNAWCWLDFLIVDVSLVTLVANTL. Residues 1276-1284 lie on the Extracellular side of the membrane; it reads GYSDLGPIK. A helical transmembrane segment spans residues 1285 to 1301; that stretch reads SLRTLRALRPLRALSRF. The Cytoplasmic segment spans residues 1302-1314; it reads EGMRVVVNALIGA. The helical transmembrane segment at 1315 to 1339 threads the bilayer; it reads IPSIMNVLLVCLIFWLIFSIMGVNL. The Extracellular segment spans residues 1340–1391; the sequence is FAGKFYQCVNTTDDSRFPTKQVSNRSECFALMNGSQNVRWKNLKVNFDNVGL. The cysteines at positions 1347 and 1367 are disulfide-linked. N-linked (GlcNAc...) asparagine glycans are attached at residues Asn-1349, Asn-1363, and Asn-1372. The pore-forming intramembrane region spans 1392–1402; it reads RYLSLLQVATF. Residues 1403 to 1428 lie on the Extracellular side of the membrane; it reads KGWMDIMYAAVDSVNVDQQPSYEHNL. The chain crosses the membrane as a helical span at residues 1429–1454; it reads YMYIYFVIFIIFGSFFTLNLFIGVII. The Cytoplasmic portion of the chain corresponds to 1455 to 1511; that stretch reads DNFNQQKKKLGGQDIFMTEEQKKYYNAMKKLGSKKPQKPIPRPGNKFQGCIFDLVTN. At Ser-1487 the chain carries Phosphoserine; by PKC. The IV repeat unit spans residues 1494-1792; that stretch reads IPRPGNKFQG…WEKFDPDATQ (299 aa). Residues 1512 to 1531 form a helical membrane-spanning segment; that stretch reads QAFDITIMILICLNMVTMMV. Residues 1532-1542 lie on the Extracellular side of the membrane; the sequence is EKEGQSDYMTD. Residues 1543 to 1564 form a helical membrane-spanning segment; that stretch reads VLYWINVVFIILFTGECVLKLI. The Cytoplasmic segment spans residues 1565–1573; sequence SLRHYYFTI. Residues 1574–1595 form a helical membrane-spanning segment; the sequence is GWNIFDFVVVILSIVGMFLAEL. The Extracellular segment spans residues 1596–1604; sequence IETYFVSPT. Residues 1605–1624 form a helical membrane-spanning segment; it reads LFRVIRLARIGRILRLIKGA. At 1625–1637 the chain is on the cytoplasmic side; the sequence is KGIRTLLFALMMS. A helical membrane pass occupies residues 1638–1660; it reads LPALFNIGLLLFLVMFIYAIFGM. At 1661 to 1683 the chain is on the extracellular side; the sequence is SNFAYVKKEAGINDMFNFETFGN. The segment at residues 1684–1696 is an intramembrane region (pore-forming); it reads SMICLFQITTSAG. At 1697-1730 the chain is on the extracellular side; sequence WDGLLAPILNSAPPDCDPKKVHPGSSTEGDCGSP. Cys-1712 and Cys-1727 are disulfide-bonded. The chain crosses the membrane as a helical span at residues 1731–1756; the sequence is SVGIFYFVSYIIISFLVVVNMYIAVI. The Cytoplasmic portion of the chain corresponds to 1757-1984; sequence LENFSVATEE…KGKDGKETKK (228 aa). Residues 1886-1915 form the IQ domain; the sequence is EDVSATVIQRAYRRYRLRQNVKNISSIYIK. The interval 1924-1984 is disordered; the sequence is PNKGDIVFDN…KGKDGKETKK (61 aa). Residues 1933-1956 are compositionally biased toward polar residues; sequence NVNSSSPEKTDATASTISPPSYDS. Residues 1958 to 1984 show a composition bias toward basic and acidic residues; it reads TKPDKEKYEKDKTEKEDKGKDGKETKK.

The protein belongs to the sodium channel (TC 1.A.1.10) family. Nav1.7/SCN9A subfamily. As to quaternary structure, the Nav1.7 voltage-gated sodium channel consists of an ion-conducting alpha subunit SCN9A which is functional on its own regulated by one or more beta-1 (SCN1B), beta-2 (SCN2B), beta-3 (SCN3B) and beta-4 (SCN4B) subunits. SCN1B and SCN3B are non-covalently associated with SCN9A. SCN2B and SCN4B are disulfide-linked to SCN9A. SCN1B regulates channel inactivation. Interacts with NEDD4 and NEDD4L; regulates Nav1.7 activity most probably through ubiquitination and subsequent endocytosis. Interacts with TMEM233; modulates the gating properties of NaV1.7. In terms of processing, phosphorylation at Ser-1487 by PKC in a highly conserved cytoplasmic loop increases peak sodium currents. Post-translationally, ubiquitinated by NEDD4L; which may promote its endocytosis. In terms of tissue distribution, expressed in the sciatic nerve, spinal cord, brainstem, cerebellum and cortex, but not expressed in the lung, skeletal and cardiac muscles, kidney and liver.

Its subcellular location is the cell membrane. The protein resides in the cell projection. The protein localises to the neuron projection. It localises to the axon. The catalysed reaction is Na(+)(in) = Na(+)(out). Its function is as follows. Pore-forming subunit of Nav1.7, a voltage-gated sodium (Nav) channel that directly mediates the depolarizing phase of action potentials in excitable membranes. Navs, also called VGSCs (voltage-gated sodium channels) or VDSCs (voltage-dependent sodium channels), operate by switching between closed and open conformations depending on the voltage difference across the membrane. In the open conformation they allow Na(+) ions to selectively pass through the pore, along their electrochemical gradient. The influx of Na(+) ions provokes membrane depolarization, initiating the propagation of electrical signals throughout cells and tissues. Nav1.7 plays a crucial role in controlling the excitability and action potential propagation from nociceptor neurons, thereby contributing to the sensory perception of pain. The sequence is that of Sodium channel protein type 9 subunit alpha from Oryctolagus cuniculus (Rabbit).